The following is a 461-amino-acid chain: Elongation factor 1-alpha (461 aa).

Residues 5 to 242 enclose the tr-type G domain; that stretch reads KIHINIVVIG…DAILPPSRPT (238 aa). Residues 14–21 are G1; that stretch reads GHVDSGKS. 14 to 21 contributes to the GTP binding site; it reads GHVDSGKS. The G2 stretch occupies residues 70–74; the sequence is GITID. Residues 91-94 form a G3 region; that stretch reads DAPG. GTP-binding positions include 91–95 and 153–156; these read DAPGH and NKMD. Positions 153–156 are G4; sequence NKMD. The segment at 194–196 is G5; the sequence is SGW. 5-glutamyl glycerylphosphorylethanolamine occurs at positions 301 and 374.

The protein belongs to the TRAFAC class translation factor GTPase superfamily. Classic translation factor GTPase family. EF-Tu/EF-1A subfamily.

Its subcellular location is the cytoplasm. This protein promotes the GTP-dependent binding of aminoacyl-tRNA to the A-site of ribosomes during protein biosynthesis. This chain is Elongation factor 1-alpha, found in Apis mellifera (Honeybee).